Reading from the N-terminus, the 103-residue chain is NADH-quinone oxidoreductase subunit K (103 aa).

Transmembrane regions (helical) follow at residues 5–25 (VPTSYYLALSGVLFALGLIGV), 32–52 (ILIFLSVELMLNAANIALVAF), and 66–86 (FIVMTLAAAEVAIGLAIIVAI).

It belongs to the complex I subunit 4L family. In terms of assembly, NDH-1 is composed of 15 different subunits. Subunits NuoA, H, J, K, L, M, N constitute the membrane sector of the complex.

It is found in the cell membrane. It catalyses the reaction a quinone + NADH + 5 H(+)(in) = a quinol + NAD(+) + 4 H(+)(out). Its function is as follows. NDH-1 shuttles electrons from NADH, via FMN and iron-sulfur (Fe-S) centers, to quinones in the respiratory chain. The immediate electron acceptor for the enzyme in this species is believed to be a menaquinone. Couples the redox reaction to proton translocation (for every two electrons transferred, four hydrogen ions are translocated across the cytoplasmic membrane), and thus conserves the redox energy in a proton gradient. This is NADH-quinone oxidoreductase subunit K from Deinococcus radiodurans (strain ATCC 13939 / DSM 20539 / JCM 16871 / CCUG 27074 / LMG 4051 / NBRC 15346 / NCIMB 9279 / VKM B-1422 / R1).